Reading from the N-terminus, the 347-residue chain is 4-hydroxythreonine-4-phosphate dehydrogenase (347 aa).

Residues His137 and Thr138 each contribute to the substrate site. His174, His219, and His274 together coordinate a divalent metal cation. Substrate-binding residues include Lys282, Asn291, and Arg300.

It belongs to the PdxA family. Homodimer. It depends on Zn(2+) as a cofactor. The cofactor is Mg(2+). Co(2+) is required as a cofactor.

The protein resides in the cytoplasm. It catalyses the reaction 4-(phosphooxy)-L-threonine + NAD(+) = 3-amino-2-oxopropyl phosphate + CO2 + NADH. The protein operates within cofactor biosynthesis; pyridoxine 5'-phosphate biosynthesis; pyridoxine 5'-phosphate from D-erythrose 4-phosphate: step 4/5. Its function is as follows. Catalyzes the NAD(P)-dependent oxidation of 4-(phosphooxy)-L-threonine (HTP) into 2-amino-3-oxo-4-(phosphooxy)butyric acid which spontaneously decarboxylates to form 3-amino-2-oxopropyl phosphate (AHAP). In Cupriavidus pinatubonensis (strain JMP 134 / LMG 1197) (Cupriavidus necator (strain JMP 134)), this protein is 4-hydroxythreonine-4-phosphate dehydrogenase.